We begin with the raw amino-acid sequence, 273 residues long: Putative carboxypeptidase YodJ (273 aa).

The first 23 residues, 1–23, serve as a signal peptide directing secretion; sequence MKKSGKWFSLAAALSVTAIVGAG. C24 carries the N-palmitoyl cysteine lipid modification. C24 carries the S-diacylglycerol cysteine lipid modification. The disordered stretch occupies residues 27–58; it reads SNGDAQKDTKTTAETKQTEQKTADSKKSNTQN. Residues 31-53 show a composition bias toward basic and acidic residues; that stretch reads AQKDTKTTAETKQTEQKTADSKK.

Belongs to the peptidase M15B family.

The protein localises to the cell membrane. The protein is Putative carboxypeptidase YodJ (yodJ) of Bacillus subtilis (strain 168).